Consider the following 206-residue polypeptide: uncharacterized protein (206 aa).

4 helical membrane-spanning segments follow: residues 9–29, 47–67, 74–94, and 150–170; these read ILSL…SVLT, LGVV…LAFL, FFVI…INTI, and IAVI…FYAF.

It belongs to the Rht family.

Its subcellular location is the cell membrane. This is an uncharacterized protein from Synechocystis sp. (strain ATCC 27184 / PCC 6803 / Kazusa).